The sequence spans 152 residues: Small ribosomal subunit protein bS6 (152 aa).

Belongs to the bacterial ribosomal protein bS6 family.

Its function is as follows. Binds together with bS18 to 16S ribosomal RNA. The chain is Small ribosomal subunit protein bS6 from Bdellovibrio bacteriovorus (strain ATCC 15356 / DSM 50701 / NCIMB 9529 / HD100).